Consider the following 151-residue polypeptide: UPF0178 protein YaiI (151 aa).

Belongs to the UPF0178 family.

The chain is UPF0178 protein YaiI from Salmonella agona (strain SL483).